We begin with the raw amino-acid sequence, 185 residues long: Elongation factor P (185 aa).

Belongs to the elongation factor P family.

Its subcellular location is the cytoplasm. The protein operates within protein biosynthesis; polypeptide chain elongation. In terms of biological role, involved in peptide bond synthesis. Stimulates efficient translation and peptide-bond synthesis on native or reconstituted 70S ribosomes in vitro. Probably functions indirectly by altering the affinity of the ribosome for aminoacyl-tRNA, thus increasing their reactivity as acceptors for peptidyl transferase. The protein is Elongation factor P of Herpetosiphon aurantiacus (strain ATCC 23779 / DSM 785 / 114-95).